Here is a 189-residue protein sequence, read N- to C-terminus: Protein OXIDATIVE STRESS 3 LIKE 2 (189 aa).

Disordered regions lie at residues 22-49 (SSST…SSYN) and 128-147 (AMSQ…LPTL). A compositionally biased stretch (acidic residues) spans 33 to 44 (NSDDDEGGENEI).

The protein resides in the nucleus. This is Protein OXIDATIVE STRESS 3 LIKE 2 from Arabidopsis thaliana (Mouse-ear cress).